Reading from the N-terminus, the 143-residue chain is Small ribosomal subunit protein eS12 (143 aa).

The protein belongs to the eukaryotic ribosomal protein eS12 family.

This is Small ribosomal subunit protein eS12 (RPS12) from Hordeum vulgare (Barley).